The chain runs to 456 residues: RNA polymerase II-associated protein 1 homolog (456 aa).

Residues 382 to 456 (LRSVEGSLNE…PVEQLQNEED (75 aa)) are disordered. A Phosphoserine modification is found at S388. The span at 396–406 (EEKPAESREQL) shows a compositional bias: basic and acidic residues. 2 stretches are compositionally biased toward polar residues: residues 408 to 433 (SAEQTNGVKPETQAQNMSASESQANS) and 441 to 456 (GNTQPSPVEQLQNEED).

The protein belongs to the PAF1 family.

It localises to the cytoplasm. It is found in the nucleus. The chain is RNA polymerase II-associated protein 1 homolog from Schizosaccharomyces pombe (strain 972 / ATCC 24843) (Fission yeast).